The chain runs to 870 residues: Rho GTPase-activating protein 7 (870 aa).

A PH domain is found at T18–A125. The region spanning L167–F367 is the Rho-GAP domain. Disordered stretches follow at residues S378 to T432 and D446 to R465. The segment covering N407–N417 has biased composition (acidic residues). Residues G569–H693 are a coiled coil. Residues H736 to I793 form a disordered region. A compositionally biased stretch (basic and acidic residues) spans K777 to V787.

Its function is as follows. Acts as a GTPase activator for the Rac-type GTPase by converting it to an inactive GDP-bound state. The sequence is that of Rho GTPase-activating protein 7 (ROPGAP7) from Arabidopsis thaliana (Mouse-ear cress).